A 241-amino-acid polypeptide reads, in one-letter code: 2-C-methyl-D-erythritol 4-phosphate cytidylyltransferase (241 aa).

This sequence belongs to the IspD/TarI cytidylyltransferase family. IspD subfamily.

It catalyses the reaction 2-C-methyl-D-erythritol 4-phosphate + CTP + H(+) = 4-CDP-2-C-methyl-D-erythritol + diphosphate. The protein operates within isoprenoid biosynthesis; isopentenyl diphosphate biosynthesis via DXP pathway; isopentenyl diphosphate from 1-deoxy-D-xylulose 5-phosphate: step 2/6. Its function is as follows. Catalyzes the formation of 4-diphosphocytidyl-2-C-methyl-D-erythritol from CTP and 2-C-methyl-D-erythritol 4-phosphate (MEP). This chain is 2-C-methyl-D-erythritol 4-phosphate cytidylyltransferase, found in Shewanella denitrificans (strain OS217 / ATCC BAA-1090 / DSM 15013).